We begin with the raw amino-acid sequence, 569 residues long: Urease subunit alpha (569 aa).

Ni(2+) is bound by residues His-136, His-138, and Lys-219. Residue Lys-219 is modified to N6-carboxylysine. His-221 provides a ligand contact to substrate. Residues His-248 and His-274 each contribute to the Ni(2+) site. His-322 (proton donor) is an active-site residue. Asp-362 is a Ni(2+) binding site.

Belongs to the metallo-dependent hydrolases superfamily. Urease alpha subunit family. Heterotrimer of UreA (gamma), UreB (beta) and UreC (alpha) subunits. Three heterotrimers associate to form the active enzyme. Ni cation is required as a cofactor. Carboxylation allows a single lysine to coordinate two nickel ions.

The protein resides in the cytoplasm. The catalysed reaction is urea + 2 H2O + H(+) = hydrogencarbonate + 2 NH4(+). It participates in nitrogen metabolism; urea degradation; CO(2) and NH(3) from urea (urease route): step 1/1. The protein is Urease subunit alpha of Dinoroseobacter shibae (strain DSM 16493 / NCIMB 14021 / DFL 12).